The sequence spans 286 residues: ATP synthase gamma chain (286 aa).

Belongs to the ATPase gamma chain family. As to quaternary structure, F-type ATPases have 2 components, CF(1) - the catalytic core - and CF(0) - the membrane proton channel. CF(1) has five subunits: alpha(3), beta(3), gamma(1), delta(1), epsilon(1). CF(0) has three main subunits: a, b and c.

The protein localises to the cell inner membrane. Functionally, produces ATP from ADP in the presence of a proton gradient across the membrane. The gamma chain is believed to be important in regulating ATPase activity and the flow of protons through the CF(0) complex. This Pseudomonas putida (strain ATCC 700007 / DSM 6899 / JCM 31910 / BCRC 17059 / LMG 24140 / F1) protein is ATP synthase gamma chain.